Here is a 351-residue protein sequence, read N- to C-terminus: MKRVCIVGASGFTGGELLRILLQHSGVEVVCATSRKFKGEYVYRVHPNLRGFTQLKFVEPTIDAALKADVVFLALPHGESVKWVPQLYESGVAVFDLSADFRLKDPNAYVEWYKWPQPHPYPDLLAKAVYGQPELHREELVGARLVAVPGCMATASILMLAPLAKFGLISAPPVVDAKIGSSGAGAEGSVVDLHSFRTYVVRPYEPVHHRHIAEIEQELSRLAGKEVKVAFTPHAVDIVRGIFTTGHVFVEKMPTEADLWKYYRALFGDSKFIRIVKDRLGISRYPNVKYVLGSNLVDLGFELDARMKRVVTFAAIDNLVRGAAGQAVQAFNIAMGFPEDEGLRHIPVAPI.

Residues 10–13 (SGFT) and 34–36 (SRK) contribute to the NADP(+) site. Residue C151 is part of the active site. N318 lines the NADP(+) pocket.

The protein belongs to the NAGSA dehydrogenase family. Type 1 subfamily. LysY sub-subfamily.

The protein localises to the cytoplasm. It catalyses the reaction [amino-group carrier protein]-C-terminal-N-(1-carboxy-5-oxopentan-1-yl)-L-glutamine + phosphate + NADP(+) = [amino-group carrier protein]-C-terminal-N-(1-carboxy-5-phosphooxy-5-oxopentan-1-yl)-L-glutamine + NADPH + H(+). The catalysed reaction is [amino-group carrier protein]-C-terminal-gamma-(L-glutamyl-5-semialdehyde)-L-glutamate + phosphate + NADP(+) = [amino-group carrier protein]-C-terminal-gamma-(5-phospho-L-glutamyl)-L-glutamate + NADPH + H(+). It functions in the pathway amino-acid biosynthesis; L-lysine biosynthesis via AAA pathway; L-lysine from L-alpha-aminoadipate (Thermus route): step 3/5. The protein operates within amino-acid biosynthesis; L-arginine biosynthesis. In terms of biological role, involved in both the arginine and lysine biosynthetic pathways. The polypeptide is Putative [LysW]-L-2-aminoadipate/[LysW]-L-glutamate phosphate reductase (Pyrobaculum calidifontis (strain DSM 21063 / JCM 11548 / VA1)).